A 162-amino-acid polypeptide reads, in one-letter code: Transcription antitermination protein RfaH (162 aa).

The protein belongs to the RfaH family. As to quaternary structure, interacts with both the nontemplate DNA and the RNA polymerase (RNAP).

In terms of biological role, enhances distal genes transcription elongation in a specialized subset of operons that encode extracytoplasmic components. RfaH is recruited into a multi-component RNA polymerase complex by the ops element, which is a short conserved DNA sequence located downstream of the main promoter of these operons. Once bound, RfaH suppresses pausing and inhibits Rho-dependent and intrinsic termination at a subset of sites. Termination signals are bypassed, which allows complete synthesis of long RNA chains. Also negatively controls expression and surface presentation of AG43 and possibly another AG43-independent factor that mediates cell-cell interactions and biofilm formation,. This is Transcription antitermination protein RfaH from Escherichia coli O6:K15:H31 (strain 536 / UPEC).